Consider the following 164-residue polypeptide: Large ribosomal subunit protein uL10 (164 aa).

It belongs to the universal ribosomal protein uL10 family. Part of the ribosomal stalk of the 50S ribosomal subunit. The N-terminus interacts with L11 and the large rRNA to form the base of the stalk. The C-terminus forms an elongated spine to which L12 dimers bind in a sequential fashion forming a multimeric L10(L12)X complex.

Its function is as follows. Forms part of the ribosomal stalk, playing a central role in the interaction of the ribosome with GTP-bound translation factors. In Helicobacter pylori (strain HPAG1), this protein is Large ribosomal subunit protein uL10.